The sequence spans 337 residues: GTPase Obg (337 aa).

In terms of domain architecture, Obg spans 1 to 159; the sequence is MDFIDEVKLY…RNIVLKLKVL (159 aa). One can recognise an OBG-type G domain in the interval 160–329; that stretch reads SDVGIIGMPN…LNEKVKTKEI (170 aa). GTP-binding positions include 166 to 173, 191 to 195, 212 to 215, 279 to 282, and 310 to 312; these read GMPNVGKS, FTTIR, DIPG, NKCD, and DDD. Mg(2+)-binding residues include S173 and T193.

The protein belongs to the TRAFAC class OBG-HflX-like GTPase superfamily. OBG GTPase family. Monomer. The cofactor is Mg(2+).

Its subcellular location is the cytoplasm. Functionally, an essential GTPase which binds GTP, GDP and possibly (p)ppGpp with moderate affinity, with high nucleotide exchange rates and a fairly low GTP hydrolysis rate. Plays a role in control of the cell cycle, stress response, ribosome biogenesis and in those bacteria that undergo differentiation, in morphogenesis control. The polypeptide is GTPase Obg (Wolbachia pipientis subsp. Culex pipiens (strain wPip)).